The sequence spans 229 residues: Biosynthetic peptidoglycan transglycosylase (229 aa).

Residues 14 to 34 traverse the membrane as a helical segment; that stretch reads FITWRFLLVVVLLLLVLLLVL.

Belongs to the glycosyltransferase 51 family.

The protein resides in the cell inner membrane. It catalyses the reaction [GlcNAc-(1-&gt;4)-Mur2Ac(oyl-L-Ala-gamma-D-Glu-L-Lys-D-Ala-D-Ala)](n)-di-trans,octa-cis-undecaprenyl diphosphate + beta-D-GlcNAc-(1-&gt;4)-Mur2Ac(oyl-L-Ala-gamma-D-Glu-L-Lys-D-Ala-D-Ala)-di-trans,octa-cis-undecaprenyl diphosphate = [GlcNAc-(1-&gt;4)-Mur2Ac(oyl-L-Ala-gamma-D-Glu-L-Lys-D-Ala-D-Ala)](n+1)-di-trans,octa-cis-undecaprenyl diphosphate + di-trans,octa-cis-undecaprenyl diphosphate + H(+). It participates in cell wall biogenesis; peptidoglycan biosynthesis. In terms of biological role, peptidoglycan polymerase that catalyzes glycan chain elongation from lipid-linked precursors. The chain is Biosynthetic peptidoglycan transglycosylase from Shewanella denitrificans (strain OS217 / ATCC BAA-1090 / DSM 15013).